We begin with the raw amino-acid sequence, 248 residues long: Pulmonary surfactant-associated protein A (248 aa).

A signal peptide spans 1 to 17; it reads MWLRCLALALTLLMVSG. Asparagine 20 carries N-linked (GlcNAc...) asparagine glycosylation. The region spanning 28-100 is the Collagen-like domain; it reads GNPGIPGTPG…PGERGPPGLP (73 aa). The disordered stretch occupies residues 29–103; the sequence is NPGIPGTPGS…RGPPGLPASL (75 aa). Proline 30, proline 33, proline 36, proline 42, proline 54, proline 57, proline 63, proline 67, and proline 70 each carry 4-hydroxyproline. Basic and acidic residues predominate over residues 42–51; that stretch reads PGRDGRDGVK. The span at 54–65 shows a compositional bias: pro residues; it reads PGPPGPLGPPGG. The span at 84 to 93 shows a compositional bias: basic and acidic residues; that stretch reads ERGEKGEPGE. The C-type lectin domain occupies 132–248; the sequence is LVVGRKVFSS…LQYRLAICEF (117 aa). Intrachain disulfides connect cysteine 155–cysteine 246 and cysteine 224–cysteine 238. N-linked (GlcNAc...) asparagine glycosylation occurs at asparagine 207. The Ca(2+) site is built by glutamate 215, arginine 217, and asparagine 234.

The protein belongs to the SFTPA family. In terms of assembly, oligomeric complex of 6 set of homotrimers.

The protein resides in the secreted. Its subcellular location is the extracellular space. It is found in the extracellular matrix. It localises to the surface film. In terms of biological role, in presence of calcium ions, it binds to surfactant phospholipids and contributes to lower the surface tension at the air-liquid interface in the alveoli of the mammalian lung and is essential for normal respiration. Enhances the expression of MYO18A/SP-R210 on alveolar macrophages. The polypeptide is Pulmonary surfactant-associated protein A (SFTPA1) (Canis lupus familiaris (Dog)).